The following is a 366-amino-acid chain: GTPase Obg (366 aa).

Residues 1–162 (MRFVDEATIN…RRLRLELKIL (162 aa)) enclose the Obg domain. The OBG-type G domain occupies 163–335 (ADAGLLGLPN…VVDAMWRLRD (173 aa)). GTP is bound by residues 169 to 176 (GLPNAGKS), 194 to 198 (FTTLT), 218 to 221 (DIPG), 288 to 291 (NKID), and 316 to 318 (SAM). Mg(2+) is bound by residues S176 and T196.

The protein belongs to the TRAFAC class OBG-HflX-like GTPase superfamily. OBG GTPase family. Monomer. Requires Mg(2+) as cofactor.

It is found in the cytoplasm. Its function is as follows. An essential GTPase which binds GTP, GDP and possibly (p)ppGpp with moderate affinity, with high nucleotide exchange rates and a fairly low GTP hydrolysis rate. Plays a role in control of the cell cycle, stress response, ribosome biogenesis and in those bacteria that undergo differentiation, in morphogenesis control. In Nitratidesulfovibrio vulgaris (strain ATCC 29579 / DSM 644 / CCUG 34227 / NCIMB 8303 / VKM B-1760 / Hildenborough) (Desulfovibrio vulgaris), this protein is GTPase Obg.